The sequence spans 360 residues: Phenylalanine--tRNA ligase alpha subunit (360 aa).

E260 contacts Mg(2+).

This sequence belongs to the class-II aminoacyl-tRNA synthetase family. Phe-tRNA synthetase alpha subunit type 1 subfamily. In terms of assembly, tetramer of two alpha and two beta subunits. Mg(2+) is required as a cofactor.

The protein localises to the cytoplasm. The catalysed reaction is tRNA(Phe) + L-phenylalanine + ATP = L-phenylalanyl-tRNA(Phe) + AMP + diphosphate + H(+). The polypeptide is Phenylalanine--tRNA ligase alpha subunit (Afipia carboxidovorans (strain ATCC 49405 / DSM 1227 / KCTC 32145 / OM5) (Oligotropha carboxidovorans)).